A 1831-amino-acid polypeptide reads, in one-letter code: Transcription elongation factor SPT6 (1831 aa).

A compositionally biased stretch (acidic residues) spans 1–19 (MAEFLDSEAEESEEEEELD). Disordered stretches follow at residues 1–99 (MAEF…YDLI), 117–199 (RRIH…PIFT), 221–240 (KYEE…DEDL), and 470–501 (AEQR…AAEA). Residues 7–59 (SEAEESEEEEELDVNERKRLKKLKAAVSDSSEEEEDDEERLREELKDLIDDNP) are a coiled coil. A phosphoserine mark is found at Ser34, Ser36, and Ser37. Over residues 45–55 (ERLREELKDLI) the composition is skewed to basic and acidic residues. Residues 56–66 (DDNPIEEDDGS) are compositionally biased toward acidic residues. 3 positions are modified to phosphoserine: Ser66, Ser70, and Ser75. Residues 85–99 (DDLDDRLEDDDYDLI) show a composition bias toward acidic residues. Basic and acidic residues-rich tracts occupy residues 119–140 (IHDN…REQI) and 151–163 (SIGH…HREA). Ser124, Ser151, Ser156, and Ser159 each carry phosphoserine. 2 stretches are compositionally biased toward acidic residues: residues 164 to 180 (DDYD…DFIV) and 223 to 240 (EEDD…DEDL). Residue Thr171 is modified to Phosphothreonine. Ser173 carries the phosphoserine modification. A coiled-coil region spans residues 467–494 (RMQAEQRRKAIQERREAKARRQAAAAEN). A compositionally biased stretch (basic and acidic residues) spans 470–482 (AEQRRKAIQERRE). The region spanning 1217–1286 (WNHFDANACP…DRFSVECSSR (70 aa)) is the S1 motif domain. The 112-residue stretch at 1329-1440 (IYARRVIAHP…LIQYKYYKPN (112 aa)) folds into the SH2 domain. Over residues 1531–1542 (PASASASNLTPL) the composition is skewed to low complexity. Disordered stretches follow at residues 1531 to 1587 (PASA…VGGG), 1602 to 1716 (GTSG…QQRA), and 1730 to 1831 (ARRR…YDEN). Residues 1565-1575 (YSVTGSVTGGT) show a composition bias toward polar residues. The segment covering 1602–1627 (GTSGSSAPGAGVSSSHYGSSSTPSFG) has biased composition (low complexity). Residues 1631-1641 (TPYTPSGQTPF) show a composition bias toward polar residues. The span at 1660–1683 (PSPSSQSSSSQRHHYGSSSGTGST) shows a compositional bias: low complexity. A phosphoserine mark is found at Ser1661 and Ser1664. Over residues 1689-1703 (MGGGGGGGVGGGGGS) the composition is skewed to gly residues. Residues 1736-1746 (QHQSHQSYHAQ) are compositionally biased toward low complexity. Positions 1772-1783 (RGTGGGGGGGYG) are enriched in gly residues. Residues 1799 to 1818 (GMSSKASVRSTPRTNASPHS) show a composition bias toward polar residues. At Ser1815 the chain carries Phosphoserine.

It belongs to the SPT6 family. In terms of assembly, self associates. Interacts with RNA polymerase II. Interacts with the FACT complex, which is composed of dre4/Spt16 and Ssrp/Ssrp1. Interacts with the exosome, a complex with 3'-5' exoribonuclease activity which is composed of at least Csl4, Dis3, Mtr3, Rrp4, Rrp6, Rrp40, Rrp42, Rrp46 and Ski6. Interacts with the DRB sensitivity-inducing factor complex (the DSIF complex), which is composed of Spt4 and Spt5.

The protein localises to the nucleus. Its function is as follows. Histone H3-H4 chaperone that plays a role in maintenance of chromatin structure during RNA polymerase II transcription elongation. Required for the transcriptional induction of heat shock response genes and for maximal recruitment of two other elongation factors, Spt5 and Paf1, to the induced Hsp70. Plays a critical role in normal fly development throughout the lifecycle. In Drosophila melanogaster (Fruit fly), this protein is Transcription elongation factor SPT6 (Spt6).